The chain runs to 461 residues: Phosphatidate cytidylyltransferase 1 (461 aa).

The tract at residues 1–68 (MLELRHRGGC…PEVPPSSDRT (68 aa)) is disordered. The residue at position 7 (Arg-7) is an Omega-N-methylarginine. Over residues 22–56 (REGEAAGGDHETESTSDKETDIDDRYGDLDARGDS) the composition is skewed to basic and acidic residues. Phosphoserine is present on residues Ser-35 and Ser-37. 6 consecutive transmembrane segments (helical) span residues 96 to 116 (MISLFFLIIYMGSFMLMLLVL), 149 to 169 (FLLCVNYFFYGETVADYFATF), 183 to 203 (HRFISFALYLAGFCMFVLSLV), 230 to 250 (LVIQNLFEGMIWFLVPISSVI), 279 to 299 (GFIGGFFSTVIFGFIAAYVLS), and 357 to 377 (IALSTFASLIGPFGGFFASGF).

It belongs to the CDS family. As to quaternary structure, homodimer. Interacts with FOS; this interaction may enhance catalytic activity. Mg(2+) is required as a cofactor. As to expression, expressed in adult brain, eye, smooth muscle and testis. Highly expressed in the inner segment of the photoreceptor layer of adult retina.

The protein localises to the endoplasmic reticulum membrane. The enzyme catalyses a 1,2-diacyl-sn-glycero-3-phosphate + CTP + H(+) = a CDP-1,2-diacyl-sn-glycerol + diphosphate. It carries out the reaction 1-octadecanoyl-2-(5Z,8Z,11Z,14Z-eicosatetraenoyl)-sn-glycero-3-phosphate + CTP + H(+) = 1-octadecanoyl-2-(5Z,8Z,11Z,14Z-eicosatetraenoyl)-sn-glycero-3-cytidine-5'-diphosphate + diphosphate. It catalyses the reaction 1-octadecanoyl-2-(9Z,12Z-octadecadienoyl)-sn-glycero-3-phosphate + CTP + H(+) = 1-octadecanoyl-2-(9Z,12Z-octadecadienoyl)-sn-glycero-3-cytidine-5'-diphosphate + diphosphate. The catalysed reaction is 1-hexadecanoyl-2-(5Z,8Z,11Z,14Z-eicosatetraenoyl)-sn-glycero-3-phosphate + CTP + H(+) = 1-hexadecanoyl-2-(5Z,8Z,11Z,14Z-eicosatetraenoyl)-sn-glycero-3-cytidine-5'-diphosphate + diphosphate. The enzyme catalyses 1,2-di-(5Z,8Z,11Z,14Z)-eicosatetraenoyl-sn-glycero-3-phosphate + CTP + H(+) = 1,2-di-(5Z,8Z,11Z,14Z-eicosatetraenoyl)-sn-glycero-3-cytidine-5'-diphosphate + diphosphate. It carries out the reaction 1-octadecanoyl-2-(9Z-octadecenoyl)-sn-glycero-3-phosphate + CTP + H(+) = 1-octadecanoyl-2-(9Z-octadecenoyl)-sn-glycero-3-cytidine-5'-diphosphate + diphosphate. It catalyses the reaction 1-octadecanoyl-2-(4Z,7Z,10Z,13Z,16Z,19Z-docosahexaenoyl)-sn-glycero-3-phosphate + CTP + H(+) = 1-octadecanoyl-2-(4Z,7Z,10Z,13Z,16Z,19Z-docosahexaenoyl)-sn-glycero-3-cytidine-5'-diphosphate + diphosphate. The catalysed reaction is 1,2-di-(9Z,12Z-octadecadienoyl)-sn-glycero-3-phosphate + CTP + H(+) = 1,2-di-(9Z,12Z-octadecadienoyl)-sn-glycero-3-cytidine-5'-diphosphate + diphosphate. The enzyme catalyses 1,2-di-(9Z-octadecenoyl)-sn-glycero-3-phosphate + CTP + H(+) = 1,2-di-(9Z-octadecenoyl)-sn-glycero-3-cytidine-5'-diphosphate + diphosphate. Its pathway is phospholipid metabolism; CDP-diacylglycerol biosynthesis; CDP-diacylglycerol from sn-glycerol 3-phosphate: step 3/3. Functionally, catalyzes the conversion of phosphatidic acid (PA) to CDP-diacylglycerol (CDP-DAG), an essential intermediate in the synthesis of phosphatidylglycerol, cardiolipin and phosphatidylinositol. Exhibits almost no acyl chain preference for PA, showing no discrimination for the sn-1/sn-2 acyl chain composition of PAs. Plays an important role in regulating the growth of lipid droplets which are storage organelles at the center of lipid and energy homeostasis. Positively regulates the differentiation and development of adipocytes. In Mus musculus (Mouse), this protein is Phosphatidate cytidylyltransferase 1.